The chain runs to 1774 residues: U3 small nucleolar RNA-associated protein 10 (1774 aa).

A disordered region spans residues 1206–1226 (YDKHSSAGSNDEEAGSESEAE). The span at 1215 to 1226 (NDEEAGSESEAE) shows a compositional bias: acidic residues. One copy of the HEAT repeat lies at 1734–1772 (LVPIIAELLEDEDEEVEYEVRSGLVKVVESVMGEPFDRY).

Belongs to the HEATR1/UTP10 family. As to quaternary structure, component of the ribosomal small subunit (SSU) processome.

The protein resides in the nucleus. It is found in the nucleolus. In terms of biological role, involved in nucleolar processing of pre-18S ribosomal RNA. Involved in ribosome biosynthesis. The protein is U3 small nucleolar RNA-associated protein 10 of Kluyveromyces lactis (strain ATCC 8585 / CBS 2359 / DSM 70799 / NBRC 1267 / NRRL Y-1140 / WM37) (Yeast).